The following is a 155-amino-acid chain: MSEKYVVTWDMFQMHARKLSERLLPASQWKGIIAVSRGGLFPAAVLARELGLRHIETVCIASYHDHNNQGELQVLHAAQVPNGGEGFIVVDDLVDTGNTARAIRQMYPNAKFVTVFAKPAGAELVDDYVIDIPQNTWIEQPWDLGLTFVPPLSRK.

5-phospho-alpha-D-ribose 1-diphosphate is bound by residues 37–38 (RG) and 91–99 (DDLVDTGNT). Asp-92 serves as a coordination point for Mg(2+). The guanine site is built by Asp-95 and Ile-138. Xanthine is bound by residues Asp-95 and Ile-138. GMP is bound by residues 95–99 (DTGNT) and 137–138 (WI).

The protein belongs to the purine/pyrimidine phosphoribosyltransferase family. XGPT subfamily. As to quaternary structure, homotetramer. The cofactor is Mg(2+).

It is found in the cell inner membrane. It carries out the reaction GMP + diphosphate = guanine + 5-phospho-alpha-D-ribose 1-diphosphate. It catalyses the reaction XMP + diphosphate = xanthine + 5-phospho-alpha-D-ribose 1-diphosphate. The catalysed reaction is IMP + diphosphate = hypoxanthine + 5-phospho-alpha-D-ribose 1-diphosphate. It participates in purine metabolism; GMP biosynthesis via salvage pathway; GMP from guanine: step 1/1. It functions in the pathway purine metabolism; XMP biosynthesis via salvage pathway; XMP from xanthine: step 1/1. In terms of biological role, purine salvage pathway enzyme that catalyzes the transfer of the ribosyl-5-phosphate group from 5-phospho-alpha-D-ribose 1-diphosphate (PRPP) to the N9 position of the 6-oxopurines guanine and xanthine to form the corresponding ribonucleotides GMP (guanosine 5'-monophosphate) and XMP (xanthosine 5'-monophosphate), with the release of PPi. To a lesser extent, also acts on hypoxanthine. This chain is Xanthine-guanine phosphoribosyltransferase 2, found in Haemophilus influenzae (strain 86-028NP).